We begin with the raw amino-acid sequence, 161 residues long: Nucleotide-binding protein Rmet_2899 (161 aa).

It belongs to the YajQ family.

In terms of biological role, nucleotide-binding protein. This chain is Nucleotide-binding protein Rmet_2899, found in Cupriavidus metallidurans (strain ATCC 43123 / DSM 2839 / NBRC 102507 / CH34) (Ralstonia metallidurans).